A 248-amino-acid chain; its full sequence is 2,3-bisphosphoglycerate-dependent phosphoglycerate mutase (248 aa).

Residues 8–15 (RHGESQWN), 21–22 (TG), Arg-60, 87–90 (ERHY), Lys-98, 114–115 (RR), and 183–184 (GN) each bind substrate. His-9 (tele-phosphohistidine intermediate) is an active-site residue. Glu-87 serves as the catalytic Proton donor/acceptor.

It belongs to the phosphoglycerate mutase family. BPG-dependent PGAM subfamily. As to quaternary structure, homodimer.

The catalysed reaction is (2R)-2-phosphoglycerate = (2R)-3-phosphoglycerate. Its pathway is carbohydrate degradation; glycolysis; pyruvate from D-glyceraldehyde 3-phosphate: step 3/5. In terms of biological role, catalyzes the interconversion of 2-phosphoglycerate and 3-phosphoglycerate. This is 2,3-bisphosphoglycerate-dependent phosphoglycerate mutase from Teredinibacter turnerae (strain ATCC 39867 / T7901).